Consider the following 589-residue polypeptide: ATP-dependent lipid A-core flippase (589 aa).

Transmembrane regions (helical) follow at residues 29–49 (WLLV…STFL), 68–88 (ALWL…AGYI), 157–177 (VIGA…AILL), 254–274 (LSSA…LLIA), and 283–303 (LSPG…PALK). One can recognise an ABC transmembrane type-1 domain in the interval 32–314 (VVAACGALLE…LTNVQNMLQS (283 aa)). The ABC transporter domain maps to 346-582 (IEFRGITARY…DGLYAYLYSM (237 aa)). Position 380–387 (380–387 (GRSGSGKS)) interacts with ATP.

The protein belongs to the ABC transporter superfamily. Lipid exporter (TC 3.A.1.106) family. In terms of assembly, homodimer.

Its subcellular location is the cell inner membrane. The catalysed reaction is ATP + H2O + lipid A-core oligosaccharideSide 1 = ADP + phosphate + lipid A-core oligosaccharideSide 2.. Its function is as follows. Involved in lipopolysaccharide (LPS) biosynthesis. Translocates lipid A-core from the inner to the outer leaflet of the inner membrane. Transmembrane domains (TMD) form a pore in the inner membrane and the ATP-binding domain (NBD) is responsible for energy generation. The sequence is that of ATP-dependent lipid A-core flippase from Xylella fastidiosa (strain 9a5c).